Consider the following 109-residue polypeptide: Fluoride-specific ion channel FluC 1 (109 aa).

3 consecutive transmembrane segments (helical) span residues 21 to 41 (LFIN…GFFI), 52 to 72 (IILS…YFLY), and 84 to 104 (IIFC…GFWI).

It belongs to the fluoride channel Fluc/FEX (TC 1.A.43) family.

The protein localises to the cell inner membrane. The catalysed reaction is fluoride(in) = fluoride(out). Its function is as follows. Fluoride-specific ion channel. Important for reducing fluoride concentration in the cell, thus reducing its toxicity. The chain is Fluoride-specific ion channel FluC 1 from Prochlorococcus marinus (strain MIT 9312).